A 252-amino-acid polypeptide reads, in one-letter code: Isoprenyl transferase (252 aa).

D32 is a catalytic residue. Residue D32 coordinates Mg(2+). Residues 33–36 (GNGR), W37, R45, H49, and 77–79 (STE) contribute to the substrate site. N80 functions as the Proton acceptor in the catalytic mechanism. Residues W81, R83, R200, and 206–208 (RLS) each bind substrate. Residue E219 coordinates Mg(2+).

The protein belongs to the UPP synthase family. Homodimer. It depends on Mg(2+) as a cofactor.

In terms of biological role, catalyzes the condensation of isopentenyl diphosphate (IPP) with allylic pyrophosphates generating different type of terpenoids. In Listeria innocua serovar 6a (strain ATCC BAA-680 / CLIP 11262), this protein is Isoprenyl transferase.